The chain runs to 94 residues: C-X-C motif chemokine 11-1 (94 aa).

An N-terminal signal peptide occupies residues 1-19; it reads MKTVTALLLVSLAVVAIEG. Intrachain disulfides connect Cys27-Cys54 and Cys29-Cys71.

It belongs to the intercrine alpha (chemokine CxC) family.

The protein resides in the secreted. Its function is as follows. Ligand for cxcr3.2. Chemotactic for macrophages. This Danio rerio (Zebrafish) protein is C-X-C motif chemokine 11-1 (cxcl11.1).